Consider the following 102-residue polypeptide: Large ribosomal subunit protein eL30 (102 aa).

The protein belongs to the eukaryotic ribosomal protein eL30 family. Part of the 50S ribosomal subunit.

The protein is Large ribosomal subunit protein eL30 of Thermococcus kodakarensis (strain ATCC BAA-918 / JCM 12380 / KOD1) (Pyrococcus kodakaraensis (strain KOD1)).